Here is a 562-residue protein sequence, read N- to C-terminus: Matrix metalloproteinase-25 (562 aa).

Positions 1–21 (MRLRLRLLALLLLLLAPPARA) are cleaved as a signal peptide. A propeptide spanning residues 22–107 (PKPSAQDVSL…VAGLVRRRRR (86 aa)) is cleaved from the precursor. Residues 88–95 (PRCSLPDV) carry the Cysteine switch motif. Zn(2+) is bound by residues C90 and H233. Residue E234 is part of the active site. Zn(2+) is bound by residues H237 and H243. A disordered region spans residues 278–313 (LYGKAPQTPYDKPTRKPLAPPPQPPASPTHSPSFPI). Positions 295 to 304 (LAPPPQPPAS) are enriched in pro residues. Hemopexin repeat units lie at residues 314–363 (PDRC…WEGL), 367–412 (VRVV…GLPP), 413–461 (GEEV…EGAP), and 462–508 (PSPD…WLDC). A disulfide bond links C317 and C508. The tract at residues 490-526 (SIKTEPDAPQPMGPNWLDCPAPSSGPRAPRPPKATPV) is disordered. A539 is lipidated: GPI-anchor amidated alanine. The propeptide at 540 to 562 (AGRWPAPIPLLLLPLLVGGVASR) is removed in mature form.

The protein belongs to the peptidase M10A family. The cofactor is Zn(2+). Ca(2+) serves as cofactor. The precursor is cleaved by a furin endopeptidase. As to expression, expressed predominantly in leukocytes, lung and spleen. Expressed also in colon carcinoma, astrocytoma and glioblastomas.

The protein localises to the cell membrane. The protein resides in the secreted. It localises to the extracellular space. Its subcellular location is the extracellular matrix. Functionally, may activate progelatinase A. The chain is Matrix metalloproteinase-25 (MMP25) from Homo sapiens (Human).